The primary structure comprises 199 residues: UPF0637 protein YsbB (199 aa).

Belongs to the UPF0637 family.

This is UPF0637 protein YsbB (ysbB) from Lactococcus lactis subsp. lactis (strain IL1403) (Streptococcus lactis).